The chain runs to 190 residues: Threonylcarbamoyl-AMP synthase (190 aa).

In terms of domain architecture, YrdC-like spans 8–190 (RFRIRQCAAR…DAESGAVIRA (183 aa)).

It belongs to the SUA5 family. TsaC subfamily.

The protein resides in the cytoplasm. It carries out the reaction L-threonine + hydrogencarbonate + ATP = L-threonylcarbamoyladenylate + diphosphate + H2O. Functionally, required for the formation of a threonylcarbamoyl group on adenosine at position 37 (t(6)A37) in tRNAs that read codons beginning with adenine. Catalyzes the conversion of L-threonine, HCO(3)(-)/CO(2) and ATP to give threonylcarbamoyl-AMP (TC-AMP) as the acyladenylate intermediate, with the release of diphosphate. In Alkalilimnicola ehrlichii (strain ATCC BAA-1101 / DSM 17681 / MLHE-1), this protein is Threonylcarbamoyl-AMP synthase.